We begin with the raw amino-acid sequence, 362 residues long: Spermidine/putrescine import ATP-binding protein PotA (362 aa).

The ABC transporter domain maps to 4–235 (IKLDHITKQY…PVNDFVARFI (232 aa)). 37–44 (GPSGSGKT) provides a ligand contact to ATP.

Belongs to the ABC transporter superfamily. Spermidine/putrescine importer (TC 3.A.1.11.1) family. As to quaternary structure, the complex is composed of two ATP-binding proteins (PotA), two transmembrane proteins (PotB and PotC) and a solute-binding protein (PotD).

The protein localises to the cell membrane. The enzyme catalyses ATP + H2O + polyamine-[polyamine-binding protein]Side 1 = ADP + phosphate + polyamineSide 2 + [polyamine-binding protein]Side 1.. In terms of biological role, part of the ABC transporter complex PotABCD involved in spermidine/putrescine import. Responsible for energy coupling to the transport system. The polypeptide is Spermidine/putrescine import ATP-binding protein PotA (Lactobacillus delbrueckii subsp. bulgaricus (strain ATCC BAA-365 / Lb-18)).